Here is a 113-residue protein sequence, read N- to C-terminus: T cell receptor alpha variable 12-2 (113 aa).

Positions 1 to 20 (MKSLRVLLVILWLQLSWVWS) are cleaved as a signal peptide. The region spanning 23–113 (KEVEQNSGPL…DSATYLCAVN (91 aa)) is the Ig-like domain. N-linked (GlcNAc...) asparagine glycosylation is present at Asn-43. A disulfide bridge connects residues Cys-44 and Cys-110.

In terms of assembly, alpha-beta TR is a heterodimer composed of an alpha and beta chain; disulfide-linked. The alpha-beta TR is associated with the transmembrane signaling CD3 coreceptor proteins to form the TR-CD3 (TcR or TCR). The assembly of alpha-beta TR heterodimers with CD3 occurs in the endoplasmic reticulum where a single alpha-beta TR heterodimer associates with one CD3D-CD3E heterodimer, one CD3G-CD3E heterodimer and one CD247 homodimer forming a stable octameric structure. CD3D-CD3E and CD3G-CD3E heterodimers preferentially associate with TR alpha and TR beta chains, respectively. The association of the CD247 homodimer is the last step of TcR assembly in the endoplasmic reticulum and is required for transport to the cell surface.

The protein localises to the cell membrane. In terms of biological role, v region of the variable domain of T cell receptor (TR) alpha chain that participates in the antigen recognition. Alpha-beta T cell receptors are antigen specific receptors which are essential to the immune response and are present on the cell surface of T lymphocytes. Recognize peptide-major histocompatibility (MH) (pMH) complexes that are displayed by antigen presenting cells (APC), a prerequisite for efficient T cell adaptive immunity against pathogens. Binding of alpha-beta TR to pMH complex initiates TR-CD3 clustering on the cell surface and intracellular activation of LCK that phosphorylates the ITAM motifs of CD3G, CD3D, CD3E and CD247 enabling the recruitment of ZAP70. In turn ZAP70 phosphorylates LAT, which recruits numerous signaling molecules to form the LAT signalosome. The LAT signalosome propagates signal branching to three major signaling pathways, the calcium, the mitogen-activated protein kinase (MAPK) kinase and the nuclear factor NF-kappa-B (NF-kB) pathways, leading to the mobilization of transcription factors that are critical for gene expression and essential for T cell growth and differentiation. The T cell repertoire is generated in the thymus, by V-(D)-J rearrangement. This repertoire is then shaped by intrathymic selection events to generate a peripheral T cell pool of self-MH restricted, non-autoaggressive T cells. Post-thymic interaction of alpha-beta TR with the pMH complexes shapes TR structural and functional avidity. The protein is T cell receptor alpha variable 12-2 of Homo sapiens (Human).